A 487-amino-acid polypeptide reads, in one-letter code: Cysteine--tRNA ligase (487 aa).

C29 lines the Zn(2+) pocket. A 'HIGH' region motif is present at residues 31–41 (VTVYDVNHVGH). The Zn(2+) site is built by C209, H234, and E238. The 'KMSKS' region signature appears at 266–270 (KMSKS). Position 269 (K269) interacts with ATP.

This sequence belongs to the class-I aminoacyl-tRNA synthetase family. As to quaternary structure, monomer. Requires Zn(2+) as cofactor.

It localises to the cytoplasm. The catalysed reaction is tRNA(Cys) + L-cysteine + ATP = L-cysteinyl-tRNA(Cys) + AMP + diphosphate. This is Cysteine--tRNA ligase from Persephonella marina (strain DSM 14350 / EX-H1).